The following is a 422-amino-acid chain: MNIVLFLGYLSILFAGGAIIAKIAKKIGIPDIPLLLIFGLILSILNVIPKNIVESSFDFIGNFGLIILLFIGSFEMEWNIMKRVLDVIIKLDILALLIVWIISGIVFNFVFHLPILSLIGLLFGAIVSATDPATLIPIFSSMDIDPEVAITLEAESVFNDPLGIVVTLICLSALGLAKAENPILEFFSLAVGGIILGVIAGKFYEIIISKIKFEDYIAPFTLGLAIAFWYFAEGIFPSITGYEISGFMAVAIMGLYIGNVIVHKKEHKKDMEKVAVFMDELSIFIRILIFVLLGASISIPLLEKYALPAFLCALGSILLARPVGVLIATAIPPIRPLTERIYLALEGPRGVVPATLAAMVYTEIMKHPNIVPKNIASLMPPTELAGTILVATFMTIIVSVVLEASWAKPLANILLKRKTSTS.

Transmembrane regions (helical) follow at residues 3–23 (IVLFLGYLSILFAGGAIIAKI), 28–48 (GIPDIPLLLIFGLILSILNVI), 52–72 (IVESSFDFIGNFGLIILLFIG), 93–113 (ILALLIVWIISGIVFNFVFHL), 119–139 (IGLLFGAIVSATDPATLIPIF), 157–177 (VFNDPLGIVVTLICLSALGLA), 183–203 (ILEFFSLAVGGIILGVIAGKF), 216–236 (YIAPFTLGLAIAFWYFAEGIF), 242–262 (YEISGFMAVAIMGLYIGNVIV), 281–301 (LSIFIRILIFVLLGASISIPL), 307–327 (LPAFLCALGSILLARPVGVLI), 341–361 (IYLALEGPRGVVPATLAAMVY), and 384–404 (LAGTILVATFMTIIVSVVLEA).

It belongs to the monovalent cation:proton antiporter 1 (CPA1) transporter (TC 2.A.36) family.

It localises to the cell membrane. Its function is as follows. This is probably a Na(+)/H(+) antiporter. The polypeptide is Probable Na(+)/H(+) antiporter 2 (Methanocaldococcus jannaschii (strain ATCC 43067 / DSM 2661 / JAL-1 / JCM 10045 / NBRC 100440) (Methanococcus jannaschii)).